We begin with the raw amino-acid sequence, 589 residues long: Kelch-like protein 25 (589 aa).

The BTB domain maps to 46-114 (TDVTLWAGDR…AYSSRIVINE (69 aa)). A BACK domain is found at 149–250 (CLGMMVLSDA…LPSDCLKKAV (102 aa)). 6 Kelch repeats span residues 296–340 (TLLI…AIGC), 341–388 (KVYV…ELEN), 389–444 (CLYV…SAKL), 446–492 (LFVF…VLGS), 493–538 (QIFI…ASGN), and 539–585 (KLYV…STWK).

As to quaternary structure, component of the BCR(KLHL25) E3 ubiquitin ligase complex, at least composed of CUL3, KLHL25 and RBX1.

Its pathway is protein modification; protein ubiquitination. In terms of biological role, substrate-specific adapter of a BCR (BTB-CUL3-RBX1) E3 ubiquitin ligase complex involved in various processes, such as translation homeostasis and lipid synthesis. The BCR(KLHL25) ubiquitin ligase complex acts by mediating ubiquitination of hypophosphorylated EIF4EBP1 (4E-BP1): ubiquitination and subsequent degradation of hypophosphorylated EIF4EBP1 (4E-BP1) probably serves as a homeostatic mechanism to maintain translation and prevent eIF4E inhibition when eIF4E levels are low. The BCR(KLHL25) complex does not target EIF4EBP1 (4E-BP1) when it is hyperphosphorylated or associated with eIF4E. The BCR(KLHL25) complex also acts as a regulator of lipid synthesis by mediating ubiquitination and degradation of ACLY, thereby inhibiting lipid synthesis. BCR(KLHL25)-mediated degradation of ACLY promotes fatty acid oxidation and is required for differentiation of inducible regulatory T (iTreg) cells. This chain is Kelch-like protein 25, found in Rattus norvegicus (Rat).